Consider the following 411-residue polypeptide: Translation initiation factor 2 subunit gamma (411 aa).

In terms of domain architecture, tr-type G spans Gln-9–Lys-203. The tract at residues Gly-18–Thr-25 is G1. Mg(2+) contacts are provided by Asp-21, Thr-25, Gly-46, and Ser-48. Asp-21–Ser-26 provides a ligand contact to GTP. Positions Gly-46 to Arg-50 are G2. Zn(2+) contacts are provided by Cys-61, Cys-64, Cys-73, and Cys-76. The interval Asp-90 to Gly-93 is G3. GTP contacts are provided by residues Asn-146–Asp-149 and Ser-181–His-183. Positions Asn-146–Asp-149 are G4. Residues Ser-181 to His-183 are G5.

The protein belongs to the TRAFAC class translation factor GTPase superfamily. Classic translation factor GTPase family. EIF2G subfamily. In terms of assembly, heterotrimer composed of an alpha, a beta and a gamma chain. Requires Mg(2+) as cofactor.

It catalyses the reaction GTP + H2O = GDP + phosphate + H(+). EIF-2 functions in the early steps of protein synthesis by forming a ternary complex with GTP and initiator tRNA. The protein is Translation initiation factor 2 subunit gamma of Methanocaldococcus jannaschii (strain ATCC 43067 / DSM 2661 / JAL-1 / JCM 10045 / NBRC 100440) (Methanococcus jannaschii).